We begin with the raw amino-acid sequence, 986 residues long: E3 ubiquitin-protein ligase Arkadia (986 aa).

Residues lysine 19, lysine 28, lysine 34, lysine 47, lysine 59, lysine 73, lysine 87, lysine 96, and lysine 110 each participate in a glycyl lysine isopeptide (Lys-Gly) (interchain with G-Cter in SUMO2) cross-link. The segment covering 66 to 89 has biased composition (basic and acidic residues); that stretch reads HLCDDSQKQEKDMNGNQQEQEKSL. Residues 66–106 are disordered; that stretch reads HLCDDSQKQEKDMNGNQQEQEKSLVVRKKRKSQQAGPSYVQ. Residues 120-191 are disordered; the sequence is QHLGTPSDED…HKWPRTETES (72 aa). Residues 132–151 are compositionally biased toward low complexity; sequence SSFSDCLSSPSSSLHFGDSD. The segment covering 164–173 has biased composition (polar residues); it reads RHSQTILNAK. A Glycyl lysine isopeptide (Lys-Gly) (interchain with G-Cter in SUMO2) cross-link involves residue lysine 173. Residues 174–184 show a composition bias toward basic residues; the sequence is SRSHSARSHKW. Residues lysine 198 and lysine 218 each participate in a glycyl lysine isopeptide (Lys-Gly) (interchain with G-Cter in SUMO2) cross-link. The interval 241–404 is interaction with AXIN1; sequence VLARRKYALL…VPTTSARMES (164 aa). The segment at 248–277 is disordered; the sequence is ALLPSSSSSSENDLSSESSSSSSTEGEEDL. A compositionally biased stretch (low complexity) spans 252–271; that stretch reads SSSSSSENDLSSESSSSSST. Residues 300 to 304 carry the SUMO interaction motif 1 (SIM) motif; that stretch reads VVVIE. An SUMO interaction motif 2 (SIM) motif is present at residues 325–331; sequence EVEIVTV. A disordered region spans residues 337–373; sequence SRSTLGHSRSHWSQGSSSHASRPQEPRNRSRISTVIQ. Residues 347-357 are compositionally biased toward low complexity; it reads HWSQGSSSHAS. The SUMO interaction motif 3 (SIM) signature appears at 382–386; the sequence is VVDLT. 5 disordered regions span residues 389–471, 506–561, 610–646, 659–684, and 696–719; these read EDEP…ETGP, QQHG…SYHE, APSQPLSSIDGYGSSMVAQPQPQPPPQPSLSSCRHYM, HQASACPHSHGNPPPQTQPPPQVDYV, and ISSHATSHPVAPPPPTHLASTAAP. Residues 395–466 are compositionally biased toward polar residues; that stretch reads VPTTSARMES…DSRRTTSSAV (72 aa). Over residues 508-522 the composition is skewed to basic residues; it reads HGHHFQHHHHHHHTP. Positions 551-561 are enriched in polar residues; sequence ANSSSGTSYHE. Residues 670-680 show a composition bias toward pro residues; sequence NPPPQTQPPPQ. The tract at residues 907-909 is ubiquitin binding; it reads YPH. Residues lysine 915 and lysine 919 each participate in a glycyl lysine isopeptide (Lys-Gly) (interchain with G-Cter in SUMO2) cross-link. Residues cysteine 934 and cysteine 937 each coordinate Zn(2+). The RING-type; atypical zinc-finger motif lies at 934–975; the sequence is CTICLSILEEGEDVRRLPCMHLFHQVCVDQWLITNKKCPICR. The ubiquitin binding stretch occupies residues 949-953; that stretch reads RLPCM. Histidine 957 and cysteine 960 together coordinate Zn(2+).

It belongs to the Arkadia family. As to quaternary structure, monomer. Interacts with SMAD6, SMAD7, AXIN1, AXIN2 and SKIL isoform SNON. Interacts with (phosphorylated) SMAD2 and SMAD3. Part of a complex containing RNF111, AXIN1 and SMAD7. Interacts (via SIM domains) with SUMO1 and SUMO2.

It localises to the nucleus. It is found in the cytoplasm. The protein resides in the PML body. The enzyme catalyses S-ubiquitinyl-[E2 ubiquitin-conjugating enzyme]-L-cysteine + [acceptor protein]-L-lysine = [E2 ubiquitin-conjugating enzyme]-L-cysteine + N(6)-ubiquitinyl-[acceptor protein]-L-lysine.. Its pathway is protein modification; protein ubiquitination. Binds free ubiquitin non-covalently via its RING-type zinc finger. Ubiquitin-binding leads to enhance the E3 ubiquitin-protein ligase activity by stabilizing the ubiquitin-conjugating enzyme E2 (donor ubiquitin) in the 'closed' conformation and activating ubiquitin transfer. Functionally, E3 ubiquitin-protein ligase. Required for mesoderm patterning during embryonic development. Acts as an enhancer of the transcriptional responses of the SMAD2/SMAD3 effectors, which are activated downstream of BMP. Acts by mediating ubiquitination and degradation of SMAD inhibitors such as SMAD7, inducing their proteasomal degradation and thereby enhancing the transcriptional activity of TGF-beta and BMP. In addition to enhance transcription of SMAD2/SMAD3 effectors, also regulates their turnover by mediating their ubiquitination and subsequent degradation, coupling their activation with degradation, thereby ensuring that only effectors 'in use' are degraded. Activates SMAD3/SMAD4-dependent transcription by triggering signal-induced degradation of SNON isoform of SKIL. Associates with UBE2D2 as an E2 enzyme. Specifically binds polysumoylated chains via SUMO interaction motifs (SIMs) and mediates ubiquitination of sumoylated substrates. Catalyzes 'Lys-63'-linked ubiquitination of sumoylated XPC in response to UV irradiation, promoting nucleotide excision repair. Mediates ubiquitination and degradation of sumoylated PML. The regulation of the BMP-SMAD signaling is however independent of sumoylation and is not dependent of SUMO interaction motifs (SIMs). The protein is E3 ubiquitin-protein ligase Arkadia (RNF111) of Pongo abelii (Sumatran orangutan).